The following is a 782-amino-acid chain: uncharacterized protein (782 aa).

Disordered regions lie at residues 1 to 127 (MTTT…SAMK), 205 to 234 (NAAA…SYNP), and 308 to 355 (PYNF…SYLR). A compositionally biased stretch (basic and acidic residues) spans 24 to 54 (KPQEEPTMKDKALLFEKQRQEKKMKHTEAKM). Residues 82–118 (KNVNNATSTNNATSTKNNTKNTPKNTPKNIPKNTTAK) show a composition bias toward low complexity. Polar residues predominate over residues 312–324 (ARNNHGSDVSSAM). Positions 326–336 (NARRQASETRR) are enriched in basic and acidic residues. Over residues 337–346 (SNLSSYNDRN) the composition is skewed to polar residues. The stretch at 361–628 (MEKIRTEVDK…ERLRERLREL (268 aa)) forms a coiled coil. The segment covering 629-668 (GSRDRSYNRSSRDRSHDRLYERSPRSRDRSSRDRSRDRYS) has biased composition (basic and acidic residues). Residues 629 to 689 (GSRDRSYNRS…SDSVKDYSVG (61 aa)) are disordered. Basic residues predominate over residues 669-678 (RSRSRSRYRR). The segment covering 679-689 (RSDSVKDYSVG) has biased composition (basic and acidic residues).

This is an uncharacterized protein from Yarrowia lipolytica (strain CLIB 122 / E 150) (Yeast).